The chain runs to 472 residues: Uronate isomerase (472 aa).

It belongs to the metallo-dependent hydrolases superfamily. Uronate isomerase family.

It carries out the reaction D-glucuronate = D-fructuronate. The catalysed reaction is aldehydo-D-galacturonate = keto-D-tagaturonate. It functions in the pathway carbohydrate metabolism; pentose and glucuronate interconversion. The protein is Uronate isomerase of Halalkalibacterium halodurans (strain ATCC BAA-125 / DSM 18197 / FERM 7344 / JCM 9153 / C-125) (Bacillus halodurans).